The chain runs to 162 residues: Protein A49 (162 aa).

This sequence belongs to the poxviridae A49 protein family.

The protein is Protein A49 of Variola virus (isolate Human/India/Ind3/1967) (VARV).